The following is a 411-amino-acid chain: Probable tRNA pseudouridine synthase D (411 aa).

Residue D79 is the Nucleophile of the active site. The TRUD domain maps to 150-369 (GFPNYFGQQR…STGDRRIVSA (220 aa)).

Belongs to the pseudouridine synthase TruD family.

It catalyses the reaction uridine(13) in tRNA = pseudouridine(13) in tRNA. In terms of biological role, could be responsible for synthesis of pseudouridine from uracil-13 in transfer RNAs. The protein is Probable tRNA pseudouridine synthase D of Thermoplasma acidophilum (strain ATCC 25905 / DSM 1728 / JCM 9062 / NBRC 15155 / AMRC-C165).